The sequence spans 443 residues: MFPITIGLNHKTAPVEIREKVSFHPSEINKALMELNELSALNGIVLLSTCNRLEIYAATPEVELGVSVIKKFLARHGKLREEDINQYLYVHTLYDSVRHLFRVVAGLDSMVMGETQILGQVAEAYEKSSQLNLSNKIIHAIFQNALAVGKRVRSETQIDQHPTSVSYTAVELAKQTFGDVQGKSILILGAGEMSALTAKHLVASGADTVLVSNRSMQRAQALAEEFSGRAIPYEELDTALAEADIVISATAAAHFVIKPERMRRVMEQRRQRALLLIDIAVPRDIHPNVGELEGVTLFDIDDLRGVVDSHQKAREEAALQAGRILEEEMGRFVKWHNSLYVVPTIVALQRRGEEVREIMLKSALNKLGPIDEKQEKIIRSMANSIVTHLLHAPIANLKEAANTSQGHLYTEILQNLFDLDGNELSPHAGWSVHHAASHHSNQG.

Residues 49–52 (TCNR), serine 109, 114–116 (ETQ), and glutamine 120 each bind substrate. Cysteine 50 (nucleophile) is an active-site residue. An NADP(+)-binding site is contributed by 189 to 194 (GAGEMS).

Belongs to the glutamyl-tRNA reductase family. As to quaternary structure, homodimer.

It catalyses the reaction (S)-4-amino-5-oxopentanoate + tRNA(Glu) + NADP(+) = L-glutamyl-tRNA(Glu) + NADPH + H(+). Its pathway is porphyrin-containing compound metabolism; protoporphyrin-IX biosynthesis; 5-aminolevulinate from L-glutamyl-tRNA(Glu): step 1/2. Functionally, catalyzes the NADPH-dependent reduction of glutamyl-tRNA(Glu) to glutamate 1-semialdehyde (GSA). In Desulfitobacterium hafniense (strain DSM 10664 / DCB-2), this protein is Glutamyl-tRNA reductase.